A 194-amino-acid chain; its full sequence is Large ribosomal subunit protein bL25 (194 aa).

Belongs to the bacterial ribosomal protein bL25 family. CTC subfamily. Part of the 50S ribosomal subunit; part of the 5S rRNA/L5/L18/L25 subcomplex. Contacts the 5S rRNA. Binds to the 5S rRNA independently of L5 and L18.

In terms of biological role, this is one of the proteins that binds to the 5S RNA in the ribosome where it forms part of the central protuberance. This Parabacteroides distasonis (strain ATCC 8503 / DSM 20701 / CIP 104284 / JCM 5825 / NCTC 11152) protein is Large ribosomal subunit protein bL25.